The chain runs to 303 residues: Protoheme IX farnesyltransferase (303 aa).

9 helical membrane-spanning segments follow: residues 25-45, 54-74, 104-124, 125-145, 151-171, 179-199, 227-247, 248-268, and 280-300; these read MGLV…AVVM, IPQI…ACAL, LLLL…LLNI, PSGV…SIWS, WNTV…WVAI, AIAL…ALAI, FIWL…GVVF, VVLA…TFKK, and FIYS…VSLL.

It belongs to the UbiA prenyltransferase family. Protoheme IX farnesyltransferase subfamily. In terms of assembly, interacts with CtaA.

The protein resides in the cell membrane. The catalysed reaction is heme b + (2E,6E)-farnesyl diphosphate + H2O = Fe(II)-heme o + diphosphate. It functions in the pathway porphyrin-containing compound metabolism; heme O biosynthesis; heme O from protoheme: step 1/1. Functionally, converts heme B (protoheme IX) to heme O by substitution of the vinyl group on carbon 2 of heme B porphyrin ring with a hydroxyethyl farnesyl side group. The polypeptide is Protoheme IX farnesyltransferase (Staphylococcus aureus (strain Mu3 / ATCC 700698)).